The primary structure comprises 322 residues: Acetyl-coenzyme A carboxylase carboxyl transferase subunit alpha (322 aa).

The CoA carboxyltransferase C-terminal domain maps to 32-293; that stretch reads DISEEIARLE…KRALQDALRQ (262 aa).

This sequence belongs to the AccA family. Acetyl-CoA carboxylase is a heterohexamer composed of biotin carboxyl carrier protein (AccB), biotin carboxylase (AccC) and two subunits each of ACCase subunit alpha (AccA) and ACCase subunit beta (AccD).

The protein localises to the cytoplasm. It catalyses the reaction N(6)-carboxybiotinyl-L-lysyl-[protein] + acetyl-CoA = N(6)-biotinyl-L-lysyl-[protein] + malonyl-CoA. It functions in the pathway lipid metabolism; malonyl-CoA biosynthesis; malonyl-CoA from acetyl-CoA: step 1/1. Its function is as follows. Component of the acetyl coenzyme A carboxylase (ACC) complex. First, biotin carboxylase catalyzes the carboxylation of biotin on its carrier protein (BCCP) and then the CO(2) group is transferred by the carboxyltransferase to acetyl-CoA to form malonyl-CoA. The chain is Acetyl-coenzyme A carboxylase carboxyl transferase subunit alpha from Aromatoleum aromaticum (strain DSM 19018 / LMG 30748 / EbN1) (Azoarcus sp. (strain EbN1)).